The following is a 169-amino-acid chain: Putative tRNA (cytidine(34)-2'-O)-methyltransferase (169 aa).

Positions 79, 104, 125, and 134 each coordinate S-adenosyl-L-methionine.

The protein belongs to the class IV-like SAM-binding methyltransferase superfamily. RNA methyltransferase TrmH family. TrmL subfamily.

The protein localises to the cytoplasm. The catalysed reaction is cytidine(34) in tRNA + S-adenosyl-L-methionine = 2'-O-methylcytidine(34) in tRNA + S-adenosyl-L-homocysteine + H(+). The enzyme catalyses 5-carboxymethylaminomethyluridine(34) in tRNA(Leu) + S-adenosyl-L-methionine = 5-carboxymethylaminomethyl-2'-O-methyluridine(34) in tRNA(Leu) + S-adenosyl-L-homocysteine + H(+). Could methylate the ribose at the nucleotide 34 wobble position in tRNA. In Lactococcus lactis subsp. cremoris (strain MG1363), this protein is Putative tRNA (cytidine(34)-2'-O)-methyltransferase.